Here is a 433-residue protein sequence, read N- to C-terminus: Histone acetyltransferase type B subunit 2 (433 aa).

WD repeat units lie at residues 134–174 (NHDG…NTPS), 187–227 (GQHK…KPNN), 237–277 (GHTA…SAPK), 282–322 (AHTG…VKLH), and 326–366 (SHTD…QEQT). Residues 368–372 (DDAED) form an interaction with the histone H4 N-terminus region. A WD 6 repeat occupies 383–433 (GHTSRPTDLAWSPHMEWALTSAAEDNIVMVWRPSKAVIDTGNEELTPDDLE).

This sequence belongs to the WD repeat RBAP46/RBAP48/MSI1 family. As to quaternary structure, component of the HAT-B complex composed of at least HAT1 and HAT2. The HAT-B complex binds to histone H4 tail.

Its subcellular location is the cytoplasm. The protein localises to the nucleus. Its function is as follows. Regulatory subunit of the histone acetylase B (HAT-B) complex. The complex acetylates 'Lys-12' of histone H4 which is required for telomeric silencing. The chain is Histone acetyltransferase type B subunit 2 (HAT2) from Mycosarcoma maydis (Corn smut fungus).